The following is a 265-amino-acid chain: Putative N(omega)-hydroxy-L-arginine synthase DcsA (265 aa).

The protein belongs to the DcsA family. Heme serves as cofactor.

Its function is as follows. Involved in the biosynthesis of the antibiotic D-cycloserine (DCS), a cyclic structural analog of D-alanine, used as an antitubercular agent. Could catalyze the production of N(omega)-hydroxy-L-arginine (NHA) from L-arginine. The polypeptide is Putative N(omega)-hydroxy-L-arginine synthase DcsA (Streptomyces lavendulae).